The primary structure comprises 527 residues: Glutamate--cysteine ligase (527 aa).

This sequence belongs to the glutamate--cysteine ligase type 1 family. Type 1 subfamily.

It carries out the reaction L-cysteine + L-glutamate + ATP = gamma-L-glutamyl-L-cysteine + ADP + phosphate + H(+). It functions in the pathway sulfur metabolism; glutathione biosynthesis; glutathione from L-cysteine and L-glutamate: step 1/2. In Pseudomonas aeruginosa (strain UCBPP-PA14), this protein is Glutamate--cysteine ligase.